Here is a 474-residue protein sequence, read N- to C-terminus: Probable dipeptidase B (474 aa).

Residue cysteine 11 is part of the active site.

It belongs to the peptidase C69 family.

It catalyses the reaction an L-aminoacyl-L-amino acid + H2O = 2 an L-alpha-amino acid. The sequence is that of Probable dipeptidase B (pepDB) from Lactococcus lactis subsp. lactis (strain IL1403) (Streptococcus lactis).